The chain runs to 681 residues: Glycogen-binding subunit 76A (681 aa).

Disordered stretches follow at residues 1–20 (MNDP…SRPP), 53–94 (LGSQ…DLQP), 232–251 (SLTE…NGHL), 285–391 (FADR…ASNL), and 405–435 (QDAT…CRPQ). Residues 59–69 (EEGEGNAEDEP) show a composition bias toward acidic residues. Positions 72-91 (NGTSTNTWVNSHDSEQTVTD) are enriched in polar residues. 3 stretches are compositionally biased toward basic and acidic residues: residues 237–251 (EQTK…NGHL), 297–308 (RVQKESSQERVP), and 321–336 (PSDR…RVQE). Polar residues predominate over residues 353–364 (TESISTEVTTLE). Over residues 365-374 (RSPEESRNDE) the composition is skewed to basic and acidic residues. The CBM21 domain maps to 525–632 (AVREKQVSLE…NNYGANYCFQ (108 aa)). Threonine 545 bears the Phosphothreonine mark. Phosphoserine is present on residues serine 547 and serine 549.

This is Glycogen-binding subunit 76A (Gbs-76A) from Drosophila melanogaster (Fruit fly).